Consider the following 91-residue polypeptide: Probable Fe(2+)-trafficking protein (91 aa).

Belongs to the Fe(2+)-trafficking protein family.

Could be a mediator in iron transactions between iron acquisition and iron-requiring processes, such as synthesis and/or repair of Fe-S clusters in biosynthetic enzymes. The sequence is that of Probable Fe(2+)-trafficking protein from Ralstonia pickettii (strain 12J).